The primary structure comprises 381 residues: Cobalt-precorrin-5B C(1)-methyltransferase (381 aa).

The protein belongs to the CbiD family.

It carries out the reaction Co-precorrin-5B + S-adenosyl-L-methionine = Co-precorrin-6A + S-adenosyl-L-homocysteine. It participates in cofactor biosynthesis; adenosylcobalamin biosynthesis; cob(II)yrinate a,c-diamide from sirohydrochlorin (anaerobic route): step 6/10. Its function is as follows. Catalyzes the methylation of C-1 in cobalt-precorrin-5B to form cobalt-precorrin-6A. The polypeptide is Cobalt-precorrin-5B C(1)-methyltransferase (Methylococcus capsulatus (strain ATCC 33009 / NCIMB 11132 / Bath)).